We begin with the raw amino-acid sequence, 332 residues long: Formamidase (332 aa).

The 246-residue stretch at 14–259 (FLTALIQYPV…WEIVTAEVYP (246 aa)) folds into the CN hydrolase domain. Catalysis depends on Glu60, which acts as the Proton acceptor. Lys132 functions as the Proton donor in the catalytic mechanism. Catalysis depends on Cys165, which acts as the Nucleophile.

It belongs to the carbon-nitrogen hydrolase superfamily. Aliphatic amidase family.

The catalysed reaction is formamide + H2O = formate + NH4(+). Its function is as follows. Is an aliphatic amidase with a restricted substrate specificity, as it only hydrolyzes formamide. This is Formamidase from Bacillus cereus (strain G9842).